Consider the following 882-residue polypeptide: Exo-beta-D-glucosaminidase ARB_07888 (882 aa).

Positions 1–21 (MWFVFRPAAIPALLLTLGVSA) are cleaved as a signal peptide. Residues 22-31 (LSPLRPLVST) constitute a propeptide that is removed on maturation. Asparagine 86, asparagine 200, asparagine 234, asparagine 237, asparagine 287, and asparagine 442 each carry an N-linked (GlcNAc...) asparagine glycan. Aspartate 466 functions as the Proton donor in the catalytic mechanism. Glutamate 538 (nucleophile) is an active-site residue. Residues asparagine 688, asparagine 773, and asparagine 816 are each glycosylated (N-linked (GlcNAc...) asparagine).

This sequence belongs to the glycosyl hydrolase 2 family. As to quaternary structure, monomer.

The protein resides in the secreted. It catalyses the reaction Hydrolysis of chitosan or chitosan oligosaccharides to remove successive D-glucosamine residues from the non-reducing termini.. Functionally, hydrolyzes chitosan and chitooligosaccharides with retention of anomeric configuration. This chain is Exo-beta-D-glucosaminidase ARB_07888, found in Arthroderma benhamiae (strain ATCC MYA-4681 / CBS 112371) (Trichophyton mentagrophytes).